The sequence spans 257 residues: Probable enoyl-CoA hydratase (257 aa).

Belongs to the enoyl-CoA hydratase/isomerase family.

It catalyses the reaction a (3S)-3-hydroxyacyl-CoA = a (2E)-enoyl-CoA + H2O. The catalysed reaction is a 4-saturated-(3S)-3-hydroxyacyl-CoA = a (3E)-enoyl-CoA + H2O. In terms of biological role, could possibly oxidize fatty acids using specific components. This chain is Probable enoyl-CoA hydratase (fadB1), found in Rhizobium meliloti (strain 1021) (Ensifer meliloti).